We begin with the raw amino-acid sequence, 87 residues long: MVYLLCFFLVADVSYGINKDCLLPKVVGFCRARFPRYYYNSSSRRCEKFNYGGCGGNANNFSSYYECHIKCFGPRAIIFPEDSPKEN.

The N-terminal stretch at 1–16 is a signal peptide; that stretch reads MVYLLCFFLVADVSYG. One can recognise a BPTI/Kunitz inhibitor domain in the interval 21 to 71; that stretch reads CLLPKVVGFCRARFPRYYYNSSSRRCEKFNYGGCGGNANNFSSYYECHIKC. 3 disulfides stabilise this stretch: Cys21–Cys71, Cys30–Cys54, and Cys46–Cys67.

This sequence belongs to the venom Kunitz-type family. Sea anemone type 2 potassium channel toxin subfamily.

It localises to the secreted. Its subcellular location is the nematocyst. Its function is as follows. Serine protease inhibitor that inhibits both tissue and plasma kallikreins. Has hemolytic activity. Inhibits voltage-gated potassium channels (Kv). The chain is U-actitoxin-Avd3o from Anemonia viridis (Snakelocks anemone).